The chain runs to 191 residues: Guanylate kinase (191 aa).

The Guanylate kinase-like domain maps to 10-188 (GQLIVLTGPS…ALHRLVKLIG (179 aa)). 17–24 (GPSGVGKG) contacts ATP.

The protein belongs to the guanylate kinase family.

Its subcellular location is the cytoplasm. The enzyme catalyses GMP + ATP = GDP + ADP. In terms of biological role, essential for recycling GMP and indirectly, cGMP. The protein is Guanylate kinase (gmk) of Synechocystis sp. (strain ATCC 27184 / PCC 6803 / Kazusa).